We begin with the raw amino-acid sequence, 223 residues long: Ribonuclease T (223 aa).

The 175-residue stretch at 20–194 (VVIDVETAGF…YDTEQTALLF (175 aa)) folds into the Exonuclease domain. Mg(2+) contacts are provided by Asp-23, Glu-25, His-181, and Asp-186. The active-site Proton donor/acceptor is the His-181.

Belongs to the RNase T family. Homodimer. It depends on Mg(2+) as a cofactor.

Trims short 3' overhangs of a variety of RNA species, leaving a one or two nucleotide 3' overhang. Responsible for the end-turnover of tRNA: specifically removes the terminal AMP residue from uncharged tRNA (tRNA-C-C-A). Also appears to be involved in tRNA biosynthesis. The polypeptide is Ribonuclease T (Cronobacter sakazakii (strain ATCC BAA-894) (Enterobacter sakazakii)).